The primary structure comprises 139 residues: Small ribosomal subunit protein uS11 (139 aa).

This sequence belongs to the universal ribosomal protein uS11 family. Part of the 30S ribosomal subunit.

Located on the platform of the 30S subunit. The protein is Small ribosomal subunit protein uS11 of Pyrobaculum islandicum (strain DSM 4184 / JCM 9189 / GEO3).